Consider the following 324-residue polypeptide: D-alanine--D-alanine ligase (324 aa).

An ATP-grasp domain is found at 121 to 321; sequence NQYLKGFGIR…IKDVMTDIIE (201 aa). 149–204 contributes to the ATP binding site; the sequence is INKIGLPCFIKPNAGGSSFGVTKVKTKEDIQPAIEKAFEESDEVMIEAFMKGTEIT. Mg(2+) contacts are provided by Asp-275, Glu-288, and Asn-290.

This sequence belongs to the D-alanine--D-alanine ligase family. It depends on Mg(2+) as a cofactor. Requires Mn(2+) as cofactor.

It is found in the cytoplasm. The catalysed reaction is 2 D-alanine + ATP = D-alanyl-D-alanine + ADP + phosphate + H(+). The protein operates within cell wall biogenesis; peptidoglycan biosynthesis. Its function is as follows. Cell wall formation. This Phocaeicola vulgatus (strain ATCC 8482 / DSM 1447 / JCM 5826 / CCUG 4940 / NBRC 14291 / NCTC 11154) (Bacteroides vulgatus) protein is D-alanine--D-alanine ligase.